A 38-amino-acid polypeptide reads, in one-letter code: Photosystem I reaction center subunit IX (38 aa).

A helical transmembrane segment spans residues 6 to 26 (YLSTAPVVATLWLFLTAGILI).

The protein belongs to the PsaJ family.

The protein localises to the plastid. It localises to the chloroplast thylakoid membrane. Functionally, may help in the organization of the PsaE and PsaF subunits. The sequence is that of Photosystem I reaction center subunit IX from Cyanidioschyzon merolae (strain NIES-3377 / 10D) (Unicellular red alga).